Here is a 414-residue protein sequence, read N- to C-terminus: O-methyltransferase sirM (414 aa).

Asp-270 contacts S-adenosyl-L-methionine. Catalysis depends on His-321, which acts as the Proton acceptor.

The protein belongs to the class I-like SAM-binding methyltransferase superfamily. Cation-independent O-methyltransferase family. COMT subfamily.

It participates in mycotoxin biosynthesis. O-methyltransferase; part of the gene cluster that mediates the biosynthesis of sirodesmin PL, an epipolythiodioxopiperazine (ETP) characterized by a disulfide bridged cyclic dipeptide and that acts as a phytotoxin which is involved in the blackleg didease of canola. SirD catalyzes the O-prenylation of L-tyrosine (L-Tyr) in the presence of dimethylallyl diphosphate (DMAPP) to yield 4-O-dimethylallyl-L-Tyr, and therefore represents probably the first pathway-specific enzyme in the biosynthesis of sirodesmin PL. 4-O-dimethylallyl-L-Tyr, then undergoes condensation with L-Ser in a reaction catalyzed by the non-ribosomal peptide synthase sirP to form the diketopiperazine (DKP) backbone. Further bishydroxylation of the DKP performed by the cytochrome P450 monooxygenase sirC leads to the production of the intermediate phomamide. This step is essential to form the reactive thiol group required for toxicity of sirodesmin PL. The next steps of sirodesmin biosynthesis are not well understood yet, but some predictions could be made from intermediate compounds identification. Phomamide is converted into phomalizarine via oxidation, probably by sirT. Further oxidation, methylation (by sirM or sirN) and reduction steps convert phomalizarine to deacetyl sirodesmin. Finally, acetyltransferase sirH probably acetylates deacetyl sirodesmin to produce sirodesmin PL. The chain is O-methyltransferase sirM from Leptosphaeria maculans (Blackleg fungus).